The primary structure comprises 224 residues: Dehydration-responsive element-binding protein 1G (224 aa).

Residues 1 to 16 (MDVSAALSSDYSSGTP) show a composition bias toward polar residues. The interval 1-46 (MDVSAALSSDYSSGTPSPVAADADDGSSAYMTVSSAPPKRRAGRTK) is disordered. The AP2/ERF DNA-binding region spans 54 to 111 (VFKGVRRRNPGRWVCEVREPHGKQRIWLGTFETAEMAARAHDVAALALRGRAACLNFA). Disordered regions lie at residues 139 to 161 (AFRP…SGAT) and 200 to 224 (PPMA…LWSY).

It belongs to the AP2/ERF transcription factor family. ERF subfamily.

The protein resides in the nucleus. Functionally, transcriptional activator that binds specifically to the DNA sequence 5'-[AG]CCGAC-3'. Binding to the C-repeat/DRE element mediates high salinity- and dehydration-inducible transcription. The chain is Dehydration-responsive element-binding protein 1G (DREB1G) from Oryza sativa subsp. japonica (Rice).